The primary structure comprises 673 residues: UvrABC system protein B (673 aa).

The Helicase ATP-binding domain maps to 28–414 (ASILQNKRSQ…EAGGEIVEQL (387 aa)). 41–48 (GITGSGKT) lines the ATP pocket. A Beta-hairpin motif is present at residues 94-117 (YYDYYQPEAYVPRTDTYIEKDMSI). The Helicase C-terminal domain maps to 433–595 (QVDDCLAEIR…ITPRTVKREI (163 aa)). Positions 633–668 (RLKIKECEKEMKKAAKEFRFEEAADWRDQMRRYQQI) constitute a UVR domain.

Belongs to the UvrB family. As to quaternary structure, forms a heterotetramer with UvrA during the search for lesions. Interacts with UvrC in an incision complex.

It localises to the cytoplasm. Its function is as follows. The UvrABC repair system catalyzes the recognition and processing of DNA lesions. A damage recognition complex composed of 2 UvrA and 2 UvrB subunits scans DNA for abnormalities. Upon binding of the UvrA(2)B(2) complex to a putative damaged site, the DNA wraps around one UvrB monomer. DNA wrap is dependent on ATP binding by UvrB and probably causes local melting of the DNA helix, facilitating insertion of UvrB beta-hairpin between the DNA strands. Then UvrB probes one DNA strand for the presence of a lesion. If a lesion is found the UvrA subunits dissociate and the UvrB-DNA preincision complex is formed. This complex is subsequently bound by UvrC and the second UvrB is released. If no lesion is found, the DNA wraps around the other UvrB subunit that will check the other stand for damage. This Protochlamydia amoebophila (strain UWE25) protein is UvrABC system protein B.